Reading from the N-terminus, the 174-residue chain is uncharacterized protein (174 aa).

Basic and acidic residues-rich tracts occupy residues 1–31 (MDKH…GKEG) and 52–67 (EPPR…ERRS). The tract at residues 1-69 (MDKHGVKTPL…GEGRERRSVS (69 aa)) is disordered.

This is an uncharacterized protein from Homo sapiens (Human).